Reading from the N-terminus, the 208-residue chain is Glutathione S-transferase F6 (208 aa).

The GST N-terminal domain maps to 2–83; that stretch reads AGIKVFGHPA…YIAHEFSDKG (82 aa). Glutathione is bound by residues 12 to 13, 41 to 42, 54 to 55, and 67 to 68; these read ST, HK, KV, and ES. One can recognise a GST C-terminal domain in the interval 89–208; the sequence is TGKDMAIIAM…TSRPSAQKVL (120 aa).

Belongs to the GST superfamily. Phi family.

It is found in the cytoplasm. It localises to the cytosol. It carries out the reaction RX + glutathione = an S-substituted glutathione + a halide anion + H(+). In terms of biological role, involved in camalexin biosynthesis by probably catalyzing the conjugation of GSH with indole-3-acetonitrile (IAN). May be involved in the conjugation of reduced glutathione to a wide number of exogenous and endogenous hydrophobic electrophiles and have a detoxification role against certain herbicides. This Arabidopsis thaliana (Mouse-ear cress) protein is Glutathione S-transferase F6 (GSTF6).